The primary structure comprises 860 residues: Pentatricopeptide repeat-containing protein At2g40720 (860 aa).

20 PPR repeats span residues 59 to 93 (SVFTFPSLLKACSALTNLSYGKTIHGSVVVLGWRY), 94 to 124 (DPFIATSLVNMYVKCGFLDYAVQVFDGWSQS), 132 to 166 (DVTVWNSMIDGYFKFRRFKEGVGCFRRMLVFGVRP), 167 to 203 (DAFSLSIVVSVMCKEGNFRREEGKQIHGFMLRNSLDT), 204 to 234 (DSFLKTALIDMYFKFGLSIDAWRVFVEIEDK), 236 to 270 (NVVLWNVMIVGFGGSGICESSLDLYMLAKNNSVKL), 271 to 305 (VSTSFTGALGACSQSENSGFGRQIHCDVVKMGLHN), 306 to 340 (DPYVCTSLLSMYSKCGMVGEAETVFSCVVDKRLEI), 341 to 371 (WNAMVAAYAENDYGYSALDLFGFMRQKSVLP), 372 to 406 (DSFTLSNVISCCSVLGLYNYGKSVHAELFKRPIQS), 407 to 437 (TSTIESALLTLYSKCGCDPDAYLVFKSMEEK), 438 to 472 (DMVAWGSLISGLCKNGKFKEALKVFGDMKDDDDSL), 475 to 509 (DSDIMTSVTNACAGLEALRFGLQVHGSMIKTGLVL), 510 to 540 (NVFVGSSLIDLYSKCGLPEMALKVFTSMSTE), 541 to 575 (NMVAWNSMISCYSRNNLPELSIDLFNLMLSQGIFP), 576 to 610 (DSVSITSVLVAISSTASLLKGKSLHGYTLRLGIPS), 611 to 641 (DTHLKNALIDMYVKCGFSKYAENIFKKMQHK), 642 to 676 (SLITWNLMIYGYGSHGDCITALSLFDEMKKAGESP), 677 to 707 (DDVTFLSLISACNHSGFVEEGKNIFEFMKQD), and 713 to 743 (NMEHYANMVDLLGRAGLLEEAYSFIKAMPIE). The type E motif stretch occupies residues 748-823 (IWLCLLSASR…QPGCSWIEVS (76 aa)). The interval 824–854 (DRTNVFFSGGSSSPMKAEIFNVLNRLKSNMV) is type E(+) motif.

It belongs to the PPR family. PCMP-E subfamily.

The polypeptide is Pentatricopeptide repeat-containing protein At2g40720 (PCMP-E26) (Arabidopsis thaliana (Mouse-ear cress)).